A 262-amino-acid polypeptide reads, in one-letter code: Phosphatidylglycerol--prolipoprotein diacylglyceryl transferase (262 aa).

The next 4 helical transmembrane spans lie at 17–37 (FAIH…LLLG), 59–79 (LLFA…TLFY), 94–114 (IWEG…ALYW), and 121–141 (TTFF…LAFG). Arg142 is a binding site for a 1,2-diacyl-sn-glycero-3-phospho-(1'-sn-glycerol). Helical transmembrane passes span 176–196 (QIYQ…FYAG), 201–221 (VGQV…LAEY), and 231–251 (LLGL…FFGI).

The protein belongs to the Lgt family.

The protein resides in the cell inner membrane. The catalysed reaction is L-cysteinyl-[prolipoprotein] + a 1,2-diacyl-sn-glycero-3-phospho-(1'-sn-glycerol) = an S-1,2-diacyl-sn-glyceryl-L-cysteinyl-[prolipoprotein] + sn-glycerol 1-phosphate + H(+). It participates in protein modification; lipoprotein biosynthesis (diacylglyceryl transfer). Catalyzes the transfer of the diacylglyceryl group from phosphatidylglycerol to the sulfhydryl group of the N-terminal cysteine of a prolipoprotein, the first step in the formation of mature lipoproteins. This Polynucleobacter necessarius subsp. necessarius (strain STIR1) protein is Phosphatidylglycerol--prolipoprotein diacylglyceryl transferase.